A 427-amino-acid polypeptide reads, in one-letter code: Zinc finger protein 2 (427 aa).

A KRAB domain is found at 14–85; the sequence is VTFEDVAVTF…GFHGSEEKTW (72 aa). The tract at residues 111 to 142 is disordered; that stretch reads HRKQSSLCPKREIQTLTGGPEPEKESPKARTC. 8 C2H2-type zinc fingers span residues 169-191, 197-219, 225-247, 253-275, 281-303, 309-331, 337-359, and 365-387; these read QECSECGKTFFDHSSLIRHQRTH, YDCPECGKAFSHRSSLSRHLMFH, YECDACGKAFFDRSSLTVHQRIH, FKCNDCGKAFFDRSSLTRHQRIH, YECQQCGKAFSQKSILTRHLLTH, YECRDCGKAFYGVTSLNRHQKVH, YQCSECGKAFFDRSSLTQHQKIH, and YECGECGKAFSQRCRLTRHQRVH. The C2H2-type 9; degenerate zinc finger occupies 393–415; that stretch reads FECSVCGKEFSSKSSIIQHQRRY.

This sequence belongs to the krueppel C2H2-type zinc-finger protein family.

The protein localises to the nucleus. Functionally, may be involved in transcriptional regulation. The protein is Zinc finger protein 2 of Mus musculus (Mouse).